Consider the following 36-residue polypeptide: Termicin (36 aa).

Intrachain disulfides connect cysteine 2-cysteine 24, cysteine 7-cysteine 29, and cysteine 11-cysteine 31. At glycine 36 the chain carries Glycine amide.

Expressed in salivary glands and hemocytes.

Its subcellular location is the secreted. Its function is as follows. Weak activity against Gram-positive bacteria B.megaterium, S.pyogenes and M.luteus, strong activity against yeasts C.albicans, C.neoformans and S.cerevisiae and filamentous fungi F.oxysporum, F.culmorum, N.crassa and N.hematococca. Less active against filamentous fungus T.viride. Inactive against Gram-positive bacteria A.viridans and S.aureus, filamentous fungi A.fumigatus and B.bassiana and yeast C.glabrata. In Pseudacanthotermes spiniger, this protein is Termicin.